Reading from the N-terminus, the 276-residue chain is Mitochondrial distribution and morphology protein 12 (276 aa).

One can recognise an SMP-LTD domain in the interval 1-276 (MSIDIQWNLL…FVWPSYFTLY (276 aa)). The disordered stretch occupies residues 68 to 104 (TLYSDDSSSLDDEESDREEENMTELPPYGATENGVHK). Over residues 75 to 89 (SSLDDEESDREEENM) the composition is skewed to acidic residues.

It belongs to the MDM12 family. In terms of assembly, component of the ER-mitochondria encounter structure (ERMES) or MDM complex, composed of mmm1, mdm10, mdm12 and mdm34. A mmm1 homodimer associates with one molecule of mdm12 on each side in a pairwise head-to-tail manner, and the SMP-LTD domains of mmm1 and mdm12 generate a continuous hydrophobic tunnel for phospholipid trafficking.

Its subcellular location is the mitochondrion outer membrane. The protein localises to the endoplasmic reticulum membrane. Its function is as follows. Component of the ERMES/MDM complex, which serves as a molecular tether to connect the endoplasmic reticulum (ER) and mitochondria. Components of this complex are involved in the control of mitochondrial shape and protein biogenesis, and function in nonvesicular lipid trafficking between the ER and mitochondria. Mdm12 is required for the interaction of the ER-resident membrane protein mmm1 and the outer mitochondrial membrane-resident beta-barrel protein mdm10. The mdm12-mmm1 subcomplex functions in the major beta-barrel assembly pathway that is responsible for biogenesis of all mitochondrial outer membrane beta-barrel proteins, and acts in a late step after the SAM complex. The mdm10-mdm12-mmm1 subcomplex further acts in the TOM40-specific pathway after the action of the mdm12-mmm1 complex. Essential for establishing and maintaining the structure of mitochondria and maintenance of mtDNA nucleoids. The protein is Mitochondrial distribution and morphology protein 12 of Schizosaccharomyces japonicus (strain yFS275 / FY16936) (Fission yeast).